A 957-amino-acid chain; its full sequence is Glycine dehydrogenase (decarboxylating) (957 aa).

Lys708 is modified (N6-(pyridoxal phosphate)lysine).

It belongs to the GcvP family. In terms of assembly, the glycine cleavage system is composed of four proteins: P, T, L and H. It depends on pyridoxal 5'-phosphate as a cofactor.

The enzyme catalyses N(6)-[(R)-lipoyl]-L-lysyl-[glycine-cleavage complex H protein] + glycine + H(+) = N(6)-[(R)-S(8)-aminomethyldihydrolipoyl]-L-lysyl-[glycine-cleavage complex H protein] + CO2. Its function is as follows. The glycine cleavage system catalyzes the degradation of glycine. The P protein binds the alpha-amino group of glycine through its pyridoxal phosphate cofactor; CO(2) is released and the remaining methylamine moiety is then transferred to the lipoamide cofactor of the H protein. The chain is Glycine dehydrogenase (decarboxylating) from Escherichia coli (strain K12 / MC4100 / BW2952).